A 243-amino-acid polypeptide reads, in one-letter code: UPF0758 protein MAE_44350 (243 aa).

Residues 113–235 (VIDSPDTAAA…FQSLRQITDL (123 aa)) enclose the MPN domain. 3 residues coordinate Zn(2+): histidine 184, histidine 186, and aspartate 197. Residues 184-197 (HNHPTGSLVPSQDD) carry the JAMM motif motif.

Belongs to the UPF0758 family.

In Microcystis aeruginosa (strain NIES-843 / IAM M-2473), this protein is UPF0758 protein MAE_44350.